A 389-amino-acid chain; its full sequence is NADH-quinone oxidoreductase subunit D (389 aa).

It belongs to the complex I 49 kDa subunit family. As to quaternary structure, NDH-1 is composed of 14 different subunits. Subunits NuoB, C, D, E, F, and G constitute the peripheral sector of the complex.

It localises to the cell inner membrane. The catalysed reaction is a quinone + NADH + 5 H(+)(in) = a quinol + NAD(+) + 4 H(+)(out). Its function is as follows. NDH-1 shuttles electrons from NADH, via FMN and iron-sulfur (Fe-S) centers, to quinones in the respiratory chain. The immediate electron acceptor for the enzyme in this species is believed to be ubiquinone. Couples the redox reaction to proton translocation (for every two electrons transferred, four hydrogen ions are translocated across the cytoplasmic membrane), and thus conserves the redox energy in a proton gradient. This chain is NADH-quinone oxidoreductase subunit D, found in Rickettsia typhi (strain ATCC VR-144 / Wilmington).